The chain runs to 83 residues: Cyclin-dependent kinases regulatory subunit 2 (83 aa).

The protein belongs to the CKS family. In terms of assembly, interacts with CDKA-1, CYCD2-1 and AT4G14310.

In terms of biological role, binds to the catalytic subunit of the cyclin dependent kinases and is essential for their biological function. The sequence is that of Cyclin-dependent kinases regulatory subunit 2 (CKS2) from Arabidopsis thaliana (Mouse-ear cress).